Here is a 1085-residue protein sequence, read N- to C-terminus: MNYTSVNKIRLWVLIVFLILYNIKCICENISDLKKRLCFNNFSNSKKKIKKKWLAKKKKNYLTIWKNKTYTTKRRNGYGKIEYKREENKKDDYNFMNTSLYLNYISNVKNFLFNKNNNKKNKIYYHKCKKSNIIEAKINDNDTLLSDEEFRNDVDRNDKEYYNIKKEYSENVCNQNRINDLSNCSVSSNNNILNECSSEVKKEMNYPLHNELYDNLNDNTIGHLKSEKCKEKYIRNFCILAHIDSGKSTLADRFLELTNTIKKKRMQEQFLDMMCLEREKGITIKLKAVRMHYNNYVFNLIDTPGHFDFYHEVKRSLNVCEGAILLIDGGKGIQSQTLNIFFELKKHDIKIIPVINKIDLSTCLYDKIKDDLINKFNFKENEILKISAKYGKNVKMLFQRIISDIPPPINTINSFFRGVVFDSFFDQYKGVVLIIKVLNGELRKKTEIFFINSAKSYIIQEVGYLVPEMKPTDVISQGDIAYVCSNIRNCDDIQISETIVNKDIIKKNNHNEFVINFKKINLGRDKNIMQRLSDEGKQYLTHHNKGEIKGDENGQVKCDENGQVKCDENGQVKCDENGQVKCDENGQVKCDENGQVKCDENGQVKCDENGQVKCDENGQVKCDENGQVKCDENGQVKCDENGQVKCDENGQVKCDKNKGEIKSFQYNEVKVDERYERNKEEIIYDHEHKKEGIFNIHKNDDLIKENIKEKENFSCSIQGNDNAIPILKKTDINIKSIAANKIEASYPSVYCNIYCVNDKKSNELEMSLNKLKLNDSSFSFKKYICETLGKGFKCGFNGLLHLNIIQERIKREYNIDTIVTAPSVNYLIRVKEKYMDKRLKEKLLEKNFDIQNMHIEQMDKTSSDDCFFFMTSNVNDIPTKNVVHSIYEPYVKTNIITPEIYQKYIMNECFKRRGIFIKKEIMNDQIIFLFEMPLSEILINFLDQIKSSTKGYGSMSYENIIIYKPSELYKIHIYINKKKIDSLSFLAHKRNYEDKSRKLVSKLKTLINPHQFLIIIQAALESKIFVSEKIKPLKKNVTAKCYGGDITRRRKLIEKQNEGKKKMFEIGKVKLPPNIFTKLFDIKSE.

A tr-type G domain is found at 232-409; sequence KYIRNFCILA…RIISDIPPPI (178 aa). GTP contacts are provided by residues 241-248, 302-306, and 356-359; these read AHIDSGKS, DTPGH, and NKID.

The protein belongs to the TRAFAC class translation factor GTPase superfamily. Classic translation factor GTPase family. LepA subfamily.

Its subcellular location is the mitochondrion inner membrane. The catalysed reaction is GTP + H2O = GDP + phosphate + H(+). Its function is as follows. Promotes mitochondrial protein synthesis. May act as a fidelity factor of the translation reaction, by catalyzing a one-codon backward translocation of tRNAs on improperly translocated ribosomes. Binds to mitochondrial ribosomes in a GTP-dependent manner. The protein is Translation factor GUF1 homolog, mitochondrial of Plasmodium falciparum (isolate 3D7).